Reading from the N-terminus, the 364-residue chain is Fructose-1,6-bisphosphatase class 1 2 (364 aa).

Mg(2+) is bound by residues Glu101, Asp123, Leu125, and Asp126. Substrate contacts are provided by residues 126–129 (DGSS) and Asn218. Residue Glu290 participates in Mg(2+) binding.

The protein belongs to the FBPase class 1 family. Homotetramer. It depends on Mg(2+) as a cofactor.

It is found in the cytoplasm. It carries out the reaction beta-D-fructose 1,6-bisphosphate + H2O = beta-D-fructose 6-phosphate + phosphate. It functions in the pathway carbohydrate biosynthesis; gluconeogenesis. This Cupriavidus taiwanensis (strain DSM 17343 / BCRC 17206 / CCUG 44338 / CIP 107171 / LMG 19424 / R1) (Ralstonia taiwanensis (strain LMG 19424)) protein is Fructose-1,6-bisphosphatase class 1 2.